A 152-amino-acid polypeptide reads, in one-letter code: Deoxyuridine 5'-triphosphate nucleotidohydrolase (152 aa).

Residues 71–73 (RSG), asparagine 84, 88–90 (LID), and methionine 98 contribute to the substrate site.

This sequence belongs to the dUTPase family. Mg(2+) serves as cofactor.

It catalyses the reaction dUTP + H2O = dUMP + diphosphate + H(+). It functions in the pathway pyrimidine metabolism; dUMP biosynthesis; dUMP from dCTP (dUTP route): step 2/2. Functionally, this enzyme is involved in nucleotide metabolism: it produces dUMP, the immediate precursor of thymidine nucleotides and it decreases the intracellular concentration of dUTP so that uracil cannot be incorporated into DNA. This Klebsiella pneumoniae (strain 342) protein is Deoxyuridine 5'-triphosphate nucleotidohydrolase.